A 392-amino-acid polypeptide reads, in one-letter code: Caveolae-associated protein 1 (392 aa).

Met1 bears the N-acetylmethionine mark. A compositionally biased stretch (basic and acidic residues) spans 1–10; the sequence is MEDVTLHIVE. The interval 1–45 is disordered; it reads MEDVTLHIVERPYSGYPDASSEGPEPTPGEARATEEPSGTGSDEL. Residues 1–100 are required for homotrimerization and for interaction with CAVIN2 and CAVIN3; it reads MEDVTLHIVE…IQGELSKLGK (100 aa). Phosphoserine is present on residues Ser21 and Ser38. Thr40 bears the Phosphothreonine mark. Phosphoserine is present on residues Ser42 and Ser48. Residues 54–64 form a nuclear export signal region; the sequence is VLVLSLLDKII. Residues 55-77 are leucine-zipper 1; that stretch reads LVLSLLDKIIGAVDQIQLTQAQL. A Glycyl lysine isopeptide (Lys-Gly) (interchain with G-Cter in SUMO2) cross-link involves residue Lys118. Ser120 carries the phosphoserine modification. Lys124 participates in a covalent cross-link: Glycyl lysine isopeptide (Lys-Gly) (interchain with G-Cter in SUMO2). Residues 138–154 are nuclear localization signal; the sequence is KKLEVNEAELLRRRNFK. Residue Tyr158 is modified to Phosphotyrosine. Lys163 is covalently cross-linked (Glycyl lysine isopeptide (Lys-Gly) (interchain with G-Cter in SUMO1); alternate). Residue Lys163 forms a Glycyl lysine isopeptide (Lys-Gly) (interchain with G-Cter in SUMO2); alternate linkage. Lys167 is covalently cross-linked (Glycyl lysine isopeptide (Lys-Gly) (interchain with G-Cter in SUMO2)). Residues 168–188 form a leucine-zipper 2 region; sequence LSVSKSLKESEALPEKEGDEL. Phosphoserine is present on residues Ser169 and Ser171. Residue Lys172 forms a Glycyl lysine isopeptide (Lys-Gly) (interchain with G-Cter in SUMO2) linkage. Residues Ser173 and Ser177 each carry the phosphoserine modification. Basic and acidic residues predominate over residues 173-183; it reads SLKESEALPEK. Residues 173–198 are disordered; that stretch reads SLKESEALPEKEGDELGEGERPEEDA. The span at 184–198 shows a compositional bias: acidic residues; it reads EGDELGEGERPEEDA. The stretch at 201-284 forms a coiled coil; that stretch reads IELSSDEAVE…RMNKLGTRLV (84 aa). 2 positions are modified to phosphoserine: Ser204 and Ser205. Residues 235-251 form a nuclear localization signal region; it reads KKAFSKEKMEKTKVRTR. The segment at 259–299 is leucine-zipper 3; the sequence is LKTKENLEKTRHTLEKRMNKLGTRLVPVERREKLKTSRDKL. At Ser302 the chain carries Phosphoserine. Thr304 carries the phosphothreonine modification. Position 310 is a phosphotyrosine (Tyr310). Residue Lys328 forms a Glycyl lysine isopeptide (Lys-Gly) (interchain with G-Cter in SUMO2) linkage. The disordered stretch occupies residues 347 to 367; sequence GPDDDEVGAERGAETDLLRGS. Residues 354 to 363 are compositionally biased toward basic and acidic residues; the sequence is GAERGAETDL. Phosphoserine is present on residues Ser367, Ser368, Ser381, Ser389, and Ser391.

It belongs to the CAVIN family. In terms of assembly, component of the CAVIN complex composed of CAVIN1, CAVIN2, CAVIN3 and CAVIN4. Interacts with RNA polymerase I subunit POLR1A/RPA1 and TTF1. Binds the 3' end of pre-rRNA. Interacts with transcription factor ZNF148. Interacts with LIPE in the adipocyte cytoplasm. Interacts with CAV1, CAV3, CAVIN2, CAVIN3 and CAVIN4. Phosphorylated. Present in active and inactive forms. Changes in phosphorylation pattern may alter activity. Phosphorylation at Tyr-158 is essential for its function in the regulation of ribosomal transcriptional activity. In terms of processing, monoubiquitinated. In terms of tissue distribution, expressed in the adipocyte (at protein level). Expressed in all striated and smooth muscles tested including diaphragm, esophageal striated muscle, fibroblast, endocardial endothelium, epicardial mesothelium, intestinal smooth muscle, masseter, soleus muscle, vascular smooth muscle and white gastrocnemius muscle (at protein level). Expressed in the endothelium and perineural sheath (at protein level). Not expressed in hepatocytes.

Its subcellular location is the membrane. It localises to the caveola. It is found in the cell membrane. The protein resides in the microsome. The protein localises to the endoplasmic reticulum. Its subcellular location is the cytoplasm. It localises to the cytosol. It is found in the mitochondrion. The protein resides in the nucleus. Functionally, plays an important role in caveolae formation and organization. Essential for the formation of caveolae in all tissues. Core component of the CAVIN complex which is essential for recruitment of the complex to the caveolae in presence of calveolin-1 (CAV1). Essential for normal oligomerization of CAV1. Promotes ribosomal transcriptional activity in response to metabolic challenges in the adipocytes and plays an important role in the formation of the ribosomal transcriptional loop. Dissociates transcription complexes paused by DNA-bound TTF1, thereby releasing both RNA polymerase I and pre-RNA from the template. The caveolae biogenesis pathway is required for the secretion of proteins such as GASK1A. The chain is Caveolae-associated protein 1 from Rattus norvegicus (Rat).